Consider the following 23-residue polypeptide: Caerulein precursor fragment BM2 (23 aa).

As to expression, expressed by the skin glands.

It is found in the secreted. In terms of biological role, antimicrobial peptide. This chain is Caerulein precursor fragment BM2, found in Xenopus boumbaensis (Mawa clawed frog).